The chain runs to 392 residues: MAASSPPRAGELLAEARRAFREEFGAEPELAVSAPGRVNLIGEHTDYNQGLVLPMALELVTVLVGSPRADGLVSLLTTSEDADEPRRLQFPLPTAQRSLEPGTPRWANYVKGVIQHYPAAPLPGFSAVVVSSVPLGGGLSSSASLEVATYTFLQQLCPDSGSVAARAQVCQQAEHSFAGVPCGIMDQLIALLGQEGHALLIDCRSLETSLVPLSEPKLAVLITNSNVRHSLGSSEYPLRRRQCEEVARALGKESLREVQLEELEAGRELVSKEGFRRARHVVGEIRRTAQAAAALCRGDYRAFGRLMVESHHSLRDDYEVSCPELDQLVEAALSAPGVYGSRMTGGGFGGCTVTLLEASFTSQVMQHIQEQYSGTATFYLSQAADGAKVLHW.

Positions 37, 43, 44, and 46 each coordinate alpha-D-galactose. ATP-binding residues include glycine 136, glycine 138, serine 140, and serine 141. Residue aspartate 186 coordinates alpha-D-galactose. The active-site Proton acceptor is the aspartate 186. Serine 230 is subject to Phosphoserine. Tyrosine 236 lines the alpha-D-galactose pocket.

It belongs to the GHMP kinase family. GalK subfamily. Homodimer.

It carries out the reaction alpha-D-galactose + ATP = alpha-D-galactose 1-phosphate + ADP + H(+). The protein operates within carbohydrate metabolism; galactose metabolism. In terms of biological role, catalyzes the transfer of a phosphate from ATP to alpha-D-galactose and participates in the first committed step in the catabolism of galactose. The chain is Galactokinase (GALK1) from Canis lupus familiaris (Dog).